The primary structure comprises 637 residues: Nuclear receptor subfamily 2 group C member 1-A (637 aa).

The nuclear receptor DNA-binding region spans 149–224 (VELCVVCGDK…LGMKQDSVQC (76 aa)). NR C4-type zinc fingers lie at residues 152 to 172 (CVVC…CEGC) and 188 to 207 (CRGS…CQYC). The region spanning 383 to 624 (CLGSNANLLH…SIIPYILRME (242 aa)) is the NR LBD domain.

The protein belongs to the nuclear hormone receptor family. NR2 subfamily.

It is found in the nucleus. Its function is as follows. Orphan nuclear receptor. Binds the IR7 element in the promoter of its own gene in an autoregulatory negative feedback mechanism. Primarily repressor of a broad range of genes. Binds to hormone response elements (HREs) consisting of two 5'-AGGTCA-3' half site direct repeat consensus sequences. The protein is Nuclear receptor subfamily 2 group C member 1-A (nr2c1-a) of Xenopus laevis (African clawed frog).